The sequence spans 43 residues: Augerpeptide hhe9.2 (43 aa).

The EGF-like domain maps to 2–40 (EEVGCFPNVCKNDGNCSIETSTGMTRCQCLEGYTGHVCE). 3 cysteine pairs are disulfide-bonded: cysteine 6/cysteine 28, cysteine 11/cysteine 30, and cysteine 17/cysteine 39.

Expressed by the venom duct.

Its subcellular location is the secreted. The sequence is that of Augerpeptide hhe9.2 from Hastula hectica (Sea snail).